Reading from the N-terminus, the 560-residue chain is Nitrite reductase (560 aa).

The N-terminal stretch at 1–26 (MSNVGKPILAGLIAGLSLLGLAVAQA) is a signal peptide. The tract at residues 27 to 29 (AAP) is N-terminal tail. The Cytochrome c domain maps to 30–126 (EMTAEEKEAS…ARYIQHTPDI (97 aa)). Cys-47, Cys-50, and His-51 together coordinate heme c. The disordered stretch occupies residues 61–80 (KNLEPHWSKTEADGKKTEGG). Basic and acidic residues predominate over residues 63-78 (LEPHWSKTEADGKKTE). Heme c contacts are provided by Thr-97 and Met-101. Residues 127–560 (PPEFSLQDMK…NVFNTMNDVY (434 aa)) form a D1-heme domain region. Positions 193, 236, 237, 256, 382, and 500 each coordinate heme d1.

As to quaternary structure, homodimer in solution. It depends on heme c as a cofactor. The cofactor is heme.

It localises to the periplasm. It carries out the reaction nitric oxide + Fe(III)-[cytochrome c] + H2O = Fe(II)-[cytochrome c] + nitrite + 2 H(+). The catalysed reaction is A + NH4(+) + H2O = hydroxylamine + AH2 + H(+). This is Nitrite reductase (nirS) from Stutzerimonas stutzeri (Pseudomonas stutzeri).